We begin with the raw amino-acid sequence, 122 residues long: Class I hydrophobin 2 (122 aa).

Positions 1 to 22 (MFARVSTLFAMFFLGLALMVSA) are cleaved as a signal peptide. 4 disulfide bridges follow: Cys40–Cys101, Cys47–Cys95, Cys48–Cys81, and Cys102–Cys115.

This sequence belongs to the fungal hydrophobin family. As to quaternary structure, self-assembles to form functional amyloid fibrils called rodlets. Self-assembly into fibrillar rodlets occurs spontaneously at hydrophobic:hydrophilic interfaces and the rodlets further associate laterally to form amphipathic monolayers.

The protein localises to the secreted. Its subcellular location is the cell wall. Functionally, aerial growth, conidiation, and dispersal of filamentous fungi in the environment rely upon a capability of their secreting small amphipathic proteins called hydrophobins (HPBs) with low sequence identity. Class I can self-assemble into an outermost layer of rodlet bundles on aerial cell surfaces, conferring cellular hydrophobicity that supports fungal growth, development and dispersal; whereas Class II form highly ordered films at water-air interfaces through intermolecular interactions but contribute nothing to the rodlet structure. Hah2 is a class I hydrophobin that is involved in aerial growth of mycelia, but does not play a role in pathogenesis. The chain is Class I hydrophobin 2 from Heterobasidion annosum (Root rot fungus).